We begin with the raw amino-acid sequence, 396 residues long: Phosphopentomutase (396 aa).

Mn(2+)-binding residues include Asp-14, Asp-286, His-291, Asp-327, His-328, and His-339.

It belongs to the phosphopentomutase family. Mn(2+) serves as cofactor.

Its subcellular location is the cytoplasm. It carries out the reaction 2-deoxy-alpha-D-ribose 1-phosphate = 2-deoxy-D-ribose 5-phosphate. The catalysed reaction is alpha-D-ribose 1-phosphate = D-ribose 5-phosphate. It functions in the pathway carbohydrate degradation; 2-deoxy-D-ribose 1-phosphate degradation; D-glyceraldehyde 3-phosphate and acetaldehyde from 2-deoxy-alpha-D-ribose 1-phosphate: step 1/2. Its function is as follows. Isomerase that catalyzes the conversion of deoxy-ribose 1-phosphate (dRib-1-P) and ribose 1-phosphate (Rib-1-P) to deoxy-ribose 5-phosphate (dRib-5-P) and ribose 5-phosphate (Rib-5-P), respectively. The polypeptide is Phosphopentomutase (Staphylococcus carnosus (strain TM300)).